The chain runs to 250 residues: MQHIKHMRTAVRLARYALDHDETPVACIFVHTPTGQVMAYGMNDTNKSLTGVAHAEFMGIDQIKAMLGSRGVVDVFKDITLYVTVEPCIMCASALKQLDIGKVVFGCGNERFGGNGTVLSVNHDTCTLVPKNNSAAGYESIPGILRKEAIMLLRYFYVRQNERAPKPRSKSDRVLDKNTFPPMEWSKYLNEEAFIETFGDDYRTCFANKVDLSSNSVDWDLIDSHQDNIIQELEEQCKMFKFNVHKKSKV.

The 119-residue stretch at 1–119 folds into the CMP/dCMP-type deaminase domain; sequence MQHIKHMRTA…ERFGGNGTVL (119 aa). His54 is a binding site for Zn(2+). Glu56 functions as the Proton donor in the catalytic mechanism. 2 residues coordinate Zn(2+): Cys88 and Cys91.

Belongs to the cytidine and deoxycytidylate deaminase family. ADAT2 subfamily. Heterodimer with TAD3. Zn(2+) serves as cofactor.

The protein localises to the cytoplasm. It is found in the nucleus. The enzyme catalyses adenosine(34) in tRNA + H2O + H(+) = inosine(34) in tRNA + NH4(+). Functionally, structural subunit of tRNA-specific adenosine deaminase, which deaminates adenosine-34 (the first, also called wobble position of the anticodon) to inosine in many tRNAs. Inosine-34 allows the decoding of 3 different nucleotides at the third position of mRNA codons, as inosine is able to pair with U, C, and A. In Saccharomyces cerevisiae (strain ATCC 204508 / S288c) (Baker's yeast), this protein is tRNA-specific adenosine deaminase subunit TAD2 (TAD2).